A 308-amino-acid polypeptide reads, in one-letter code: Limonin dehydrogenase (308 aa).

It belongs to the aldehyde dehydrogenase family.

The protein localises to the periplasm. With respect to regulation, completely inhibited by HgCl(2), CoCl(2) and CaCl(2). Catalyzes the NAD(+)-dependent conversion of limonin. In Pseudomonas putida (Arthrobacter siderocapsulatus), this protein is Limonin dehydrogenase.